The sequence spans 440 residues: Adenylosuccinate synthetase (440 aa).

GTP-binding positions include glycine 14 to lysine 20 and glycine 42 to threonine 44. Aspartate 15 functions as the Proton acceptor in the catalytic mechanism. Mg(2+) contacts are provided by aspartate 15 and glycine 42. IMP contacts are provided by residues aspartate 15–lysine 18, asparagine 40–histidine 43, threonine 131, arginine 145, glutamine 226, threonine 241, and arginine 313. The active-site Proton donor is the histidine 43. Alanine 309 to arginine 315 is a binding site for substrate. Residues arginine 315, lysine 341–aspartate 343, and serine 423–glycine 425 each bind GTP.

Belongs to the adenylosuccinate synthetase family. As to quaternary structure, homodimer. It depends on Mg(2+) as a cofactor.

It localises to the cytoplasm. The catalysed reaction is IMP + L-aspartate + GTP = N(6)-(1,2-dicarboxyethyl)-AMP + GDP + phosphate + 2 H(+). Its pathway is purine metabolism; AMP biosynthesis via de novo pathway; AMP from IMP: step 1/2. Functionally, plays an important role in the de novo pathway of purine nucleotide biosynthesis. Catalyzes the first committed step in the biosynthesis of AMP from IMP. This chain is Adenylosuccinate synthetase, found in Hydrogenovibrio crunogenus (strain DSM 25203 / XCL-2) (Thiomicrospira crunogena).